A 137-amino-acid polypeptide reads, in one-letter code: MEKTLSIIKPDAVKKGVIGKILDRFESNGLRIAAMKKVQLSKEQAENFYAVHKERPFFKDLVEFMISGPVVVSVLEGEGAVLKNRDLMGATNPKEAKAGTIRADFAESIDANAVHGSDSLENAKIEIDFFFKPNEIC.

6 residues coordinate ATP: Lys9, Phe57, Arg85, Thr91, Arg102, and Asn112. Residue His115 is the Pros-phosphohistidine intermediate of the active site.

The protein belongs to the NDK family. As to quaternary structure, homotetramer. Mg(2+) is required as a cofactor.

The protein localises to the cytoplasm. The enzyme catalyses a 2'-deoxyribonucleoside 5'-diphosphate + ATP = a 2'-deoxyribonucleoside 5'-triphosphate + ADP. It catalyses the reaction a ribonucleoside 5'-diphosphate + ATP = a ribonucleoside 5'-triphosphate + ADP. Its function is as follows. Major role in the synthesis of nucleoside triphosphates other than ATP. The ATP gamma phosphate is transferred to the NDP beta phosphate via a ping-pong mechanism, using a phosphorylated active-site intermediate. This chain is Nucleoside diphosphate kinase, found in Campylobacter jejuni subsp. jejuni serotype O:6 (strain 81116 / NCTC 11828).